The chain runs to 423 residues: Putative galacturan 1,4-alpha-galacturonidase C (423 aa).

The signal sequence occupies residues 1–20 (MQLRASVLLSFLGLASVGHA). Asparagine 92, asparagine 98, asparagine 118, asparagine 156, asparagine 179, and asparagine 191 each carry an N-linked (GlcNAc...) asparagine glycan. 2 PbH1 repeats span residues 215–236 (ATNI…AIKP) and 238–258 (SYNI…AIGS). Aspartate 229 serves as the catalytic Proton donor. The cysteines at positions 231 and 248 are disulfide-linked. N-linked (GlcNAc...) asparagine glycosylation is found at asparagine 245, asparagine 344, and asparagine 362. A disulfide bond links cysteine 379 and cysteine 385. Asparagine 400 carries N-linked (GlcNAc...) asparagine glycosylation.

It belongs to the glycosyl hydrolase 28 family.

Its subcellular location is the secreted. The enzyme catalyses [(1-&gt;4)-alpha-D-galacturonosyl](n) + H2O = alpha-D-galacturonate + [(1-&gt;4)-alpha-D-galacturonosyl](n-1). Functionally, specific in hydrolyzing the terminal glycosidic bond of polygalacturonic acid and oligogalacturonates. This Aspergillus niger (strain ATCC MYA-4892 / CBS 513.88 / FGSC A1513) protein is Putative galacturan 1,4-alpha-galacturonidase C (rgxC).